Reading from the N-terminus, the 233-residue chain is Antilisterial bacteriocin subtilosin biosynthesis protein AlbG (233 aa).

6 helical membrane passes run 7-27, 46-66, 116-136, 145-165, 176-198, and 203-220; these read FTLL…VQAV, GLLA…LHYV, TYVM…FEIV, TPPA…LFCM, GSLF…MLSF, and LLFL…SFIY.

The protein localises to the cell membrane. In terms of biological role, involved in the production of the bacteriocin subtilosin. This is Antilisterial bacteriocin subtilosin biosynthesis protein AlbG (albG) from Bacillus subtilis (strain 168).